The sequence spans 300 residues: tRNA-cytidine(32) 2-sulfurtransferase (300 aa).

The PP-loop motif signature appears at 57–62 (SGGKDS). [4Fe-4S] cluster-binding residues include C132, C135, and C223.

Belongs to the TtcA family. In terms of assembly, homodimer. Mg(2+) serves as cofactor. Requires [4Fe-4S] cluster as cofactor.

The protein resides in the cytoplasm. The catalysed reaction is cytidine(32) in tRNA + S-sulfanyl-L-cysteinyl-[cysteine desulfurase] + AH2 + ATP = 2-thiocytidine(32) in tRNA + L-cysteinyl-[cysteine desulfurase] + A + AMP + diphosphate + H(+). It participates in tRNA modification. Catalyzes the ATP-dependent 2-thiolation of cytidine in position 32 of tRNA, to form 2-thiocytidine (s(2)C32). The sulfur atoms are provided by the cysteine/cysteine desulfurase (IscS) system. This Xanthomonas campestris pv. campestris (strain B100) protein is tRNA-cytidine(32) 2-sulfurtransferase.